Reading from the N-terminus, the 30-residue chain is Vitri peptide A (30 aa).

The segment at residues 1–30 (GIPCGESCVWIPCITSAIGCSCKSKVCYRN) is a cross-link (cyclopeptide (Gly-Asn)). 3 disulfides stabilise this stretch: cysteine 4–cysteine 20, cysteine 8–cysteine 22, and cysteine 13–cysteine 27.

In terms of processing, this is a cyclic peptide.

Functionally, probably participates in a plant defense mechanism. Has strong cytotoxic activity against human lymphoma U-937 GTB and human myeloma RPMI-8226/s cell lines. This chain is Vitri peptide A, found in Viola arvensis (European field pansy).